The following is a 248-amino-acid chain: UPF0246 protein RC0754 (248 aa).

It belongs to the UPF0246 family.

The sequence is that of UPF0246 protein RC0754 from Rickettsia conorii (strain ATCC VR-613 / Malish 7).